The sequence spans 81 residues: Acyl carrier protein (81 aa).

The 79-residue stretch at 2 to 80 (ASKDEILAGL…DAVNFIDNAQ (79 aa)) folds into the Carrier domain. Position 40 is an O-(pantetheine 4'-phosphoryl)serine (Ser40).

Belongs to the acyl carrier protein (ACP) family. In terms of processing, 4'-phosphopantetheine is transferred from CoA to a specific serine of apo-ACP by AcpS. This modification is essential for activity because fatty acids are bound in thioester linkage to the sulfhydryl of the prosthetic group.

It localises to the cytoplasm. It participates in lipid metabolism; fatty acid biosynthesis. Functionally, carrier of the growing fatty acid chain in fatty acid biosynthesis. This Kocuria rhizophila (strain ATCC 9341 / DSM 348 / NBRC 103217 / DC2201) protein is Acyl carrier protein.